Consider the following 312-residue polypeptide: Ribose-phosphate pyrophosphokinase (312 aa).

Residues 38-40 (DGE) and 97-98 (RQ) each bind ATP. Mg(2+) contacts are provided by histidine 131 and aspartate 170. Lysine 193 is an active-site residue. D-ribose 5-phosphate-binding positions include arginine 195, aspartate 219, and 223–227 (DTAGT).

It belongs to the ribose-phosphate pyrophosphokinase family. Class I subfamily. Homohexamer. Requires Mg(2+) as cofactor.

The protein localises to the cytoplasm. The enzyme catalyses D-ribose 5-phosphate + ATP = 5-phospho-alpha-D-ribose 1-diphosphate + AMP + H(+). The protein operates within metabolic intermediate biosynthesis; 5-phospho-alpha-D-ribose 1-diphosphate biosynthesis; 5-phospho-alpha-D-ribose 1-diphosphate from D-ribose 5-phosphate (route I): step 1/1. Involved in the biosynthesis of the central metabolite phospho-alpha-D-ribosyl-1-pyrophosphate (PRPP) via the transfer of pyrophosphoryl group from ATP to 1-hydroxyl of ribose-5-phosphate (Rib-5-P). In Leptospira interrogans serogroup Icterohaemorrhagiae serovar copenhageni (strain Fiocruz L1-130), this protein is Ribose-phosphate pyrophosphokinase.